The chain runs to 66 residues: Large ribosomal subunit protein uL30 (66 aa).

The protein belongs to the universal ribosomal protein uL30 family. In terms of assembly, part of the 50S ribosomal subunit.

This Chelativorans sp. (strain BNC1) protein is Large ribosomal subunit protein uL30.